Consider the following 359-residue polypeptide: UDP-3-O-acylglucosamine N-acyltransferase (359 aa).

The active-site Proton acceptor is the His-256.

The protein belongs to the transferase hexapeptide repeat family. LpxD subfamily. In terms of assembly, homotrimer.

It catalyses the reaction a UDP-3-O-[(3R)-3-hydroxyacyl]-alpha-D-glucosamine + a (3R)-hydroxyacyl-[ACP] = a UDP-2-N,3-O-bis[(3R)-3-hydroxyacyl]-alpha-D-glucosamine + holo-[ACP] + H(+). It functions in the pathway bacterial outer membrane biogenesis; LPS lipid A biosynthesis. Functionally, catalyzes the N-acylation of UDP-3-O-acylglucosamine using 3-hydroxyacyl-ACP as the acyl donor. Is involved in the biosynthesis of lipid A, a phosphorylated glycolipid that anchors the lipopolysaccharide to the outer membrane of the cell. This Rhodopseudomonas palustris (strain BisB5) protein is UDP-3-O-acylglucosamine N-acyltransferase.